Reading from the N-terminus, the 403-residue chain is Prostaglandin D2 receptor 2 (403 aa).

Residues 1-34 (MANITLKPLCPLLEEMVQLPNHSNSSLRYIDHVS) are Extracellular-facing. N-linked (GlcNAc...) asparagine glycans are attached at residues asparagine 3, asparagine 21, and asparagine 24. Residues 35-55 (VLLHGLASLLGLVENGLILFV) traverse the membrane as a helical segment. The Cytoplasmic portion of the chain corresponds to 56–71 (VGCRMRQTVVTTWVLH). The chain crosses the membrane as a helical span at residues 72 to 92 (LALSDLLAAASLPFFTYFLAV). Residues 93–104 (GHSWELGTTFCK) lie on the Extracellular side of the membrane. A disulfide bridge connects residues cysteine 103 and cysteine 198. The helical transmembrane segment at 105-125 (LHSSVFFLNMFASGFLLSAIS) threads the bilayer. Over 126 to 147 (LDRCLQVVRPVWAQNHRTVAAA) the chain is Cytoplasmic. The helical transmembrane segment at 148–168 (HRVCLMLWALAVLNTVPYFVF) threads the bilayer. Residues 169 to 209 (RDTIPRRDGRIMCYYNMLLLNPGSDRDTTCDYRQKALAVSK) are Extracellular-facing. Residues 210–230 (FLLAFMVPLAIIASSHVAVSL) traverse the membrane as a helical segment. The Cytoplasmic segment spans residues 231 to 245 (QLHHRGRQRTGRFVR). A helical transmembrane segment spans residues 246-266 (LVAAIVVAFILCWGPYHIFSL). Over 267–284 (LEARAHSVTTLRQLASRG) the chain is Extracellular. The chain crosses the membrane as a helical span at residues 285–305 (LPFVTSLAFFNSVVNPLLYVL). Residues 306–403 (TCPDMLHKLR…KQGSLSCTLD (98 aa)) are Cytoplasmic-facing. Positions 329–332 (DSDL) match the Involved in the recycling of CRTH2 motif. A Phosphoserine modification is found at serine 330. Disordered regions lie at residues 332 to 353 (LSTG…STTT) and 384 to 403 (PRRV…CTLD). The span at 338-348 (KRCRRRHRRRA) shows a compositional bias: basic residues. Serine 349 bears the Phosphoserine mark. The segment covering 393–403 (EKQGSLSCTLD) has biased composition (polar residues).

It belongs to the G-protein coupled receptor 1 family. Post-translationally, phosphorylated.

Its subcellular location is the cell membrane. Its function is as follows. Receptor for prostaglandin D2 (PGD2). Coupled to the G(i)-protein. Receptor activation may result in pertussis toxin-sensitive decreases in cAMP levels and Ca(2+) mobilization. PI3K signaling is also implicated in mediating PTGDR2 effects. PGD2 induced receptor internalization. CRTH2 internalization can be regulated by diverse kinases such as, PKC, PKA, GRK2, GPRK5/GRK5 and GRK6. Receptor activation is responsible, at least in part, in immune regulation and allergic/inflammation responses. The chain is Prostaglandin D2 receptor 2 (Ptgdr2) from Rattus norvegicus (Rat).